The sequence spans 246 residues: Outer membrane protein assembly factor BamD (246 aa).

A signal peptide spans 1-22 (MKKKNSIIFVFMILFFNSTVQS).

This sequence belongs to the BamD family. Part of the Bam complex.

It is found in the cell outer membrane. Functionally, part of the outer membrane protein assembly complex, which is involved in assembly and insertion of beta-barrel proteins into the outer membrane. The polypeptide is Outer membrane protein assembly factor BamD (Buchnera aphidicola subsp. Acyrthosiphon pisum (strain APS) (Acyrthosiphon pisum symbiotic bacterium)).